The chain runs to 295 residues: Tyrosine recombinase XerD (295 aa).

The region spanning 1–85 (METIIEEYLK…TIRSFHQFAL (85 aa)) is the Core-binding (CB) domain. Positions 106-289 (KLPDVLDVEE…SKTQIRQMYN (184 aa)) constitute a Tyr recombinase domain. Catalysis depends on residues R146, K170, H241, R244, and H267. Y276 serves as the catalytic O-(3'-phospho-DNA)-tyrosine intermediate.

This sequence belongs to the 'phage' integrase family. XerD subfamily. As to quaternary structure, forms a cyclic heterotetrameric complex composed of two molecules of XerC and two molecules of XerD.

It is found in the cytoplasm. Functionally, site-specific tyrosine recombinase, which acts by catalyzing the cutting and rejoining of the recombining DNA molecules. The XerC-XerD complex is essential to convert dimers of the bacterial chromosome into monomers to permit their segregation at cell division. It also contributes to the segregational stability of plasmids. The protein is Tyrosine recombinase XerD of Staphylococcus haemolyticus (strain JCSC1435).